The chain runs to 222 residues: Ethylene-inducing xylanase 2 (222 aa).

The first 19 residues, 1-19 (MITFSSLLVTFSAISTSLA), serve as a signal peptide directing secretion. A GH11 domain is found at 36–222 (QRNESSLVRR…GEGAATQTVS (187 aa)). 2 N-linked (GlcNAc...) asparagine glycosylation sites follow: N38 and N94. Residue E120 is the Nucleophile of the active site. The active-site Proton donor is E209.

It belongs to the glycosyl hydrolase 11 (cellulase G) family.

The catalysed reaction is Endohydrolysis of (1-&gt;4)-beta-D-xylosidic linkages in xylans.. It functions in the pathway glycan degradation; xylan degradation. Endo-1,4-beta-xylanase involved in the hydrolysis of xylan, a major structural heterogeneous polysaccharide found in plant biomass representing the second most abundant polysaccharide in the biosphere, after cellulose. May act as an elicitor of plant defense responses in certain plants but does not exhibit any cell death when transiently expressed in N.benthamiana. The sequence is that of Ethylene-inducing xylanase 2 from Botryotinia fuckeliana (strain B05.10) (Noble rot fungus).